Reading from the N-terminus, the 285-residue chain is Bifunctional protein FolD (285 aa).

NADP(+) contacts are provided by residues 165-167 (GAS) and I232.

It belongs to the tetrahydrofolate dehydrogenase/cyclohydrolase family. Homodimer.

It catalyses the reaction (6R)-5,10-methylene-5,6,7,8-tetrahydrofolate + NADP(+) = (6R)-5,10-methenyltetrahydrofolate + NADPH. The catalysed reaction is (6R)-5,10-methenyltetrahydrofolate + H2O = (6R)-10-formyltetrahydrofolate + H(+). Its pathway is one-carbon metabolism; tetrahydrofolate interconversion. Its function is as follows. Catalyzes the oxidation of 5,10-methylenetetrahydrofolate to 5,10-methenyltetrahydrofolate and then the hydrolysis of 5,10-methenyltetrahydrofolate to 10-formyltetrahydrofolate. This chain is Bifunctional protein FolD, found in Sulfurihydrogenibium sp. (strain YO3AOP1).